Consider the following 714-residue polypeptide: Putative glutamine--fructose-6-phosphate aminotransferase [isomerizing] (714 aa).

The active-site Nucleophile; for GATase activity is cysteine 2. One can recognise a Glutamine amidotransferase type-2 domain in the interval 2–321 (CGIFGYCNFL…DNDIAHIYDG (320 aa)). Positions 266–280 (STTSTFNHGSSTETP) are enriched in polar residues. The tract at residues 266–285 (STTSTFNHGSSTETPAENGL) is disordered. SIS domains follow at residues 387 to 526 (WLTE…DLVS) and 559 to 704 (CDKK…VDLP).

The catalysed reaction is D-fructose 6-phosphate + L-glutamine = D-glucosamine 6-phosphate + L-glutamate. It participates in nucleotide-sugar biosynthesis; UDP-N-acetyl-alpha-D-glucosamine biosynthesis; alpha-D-glucosamine 6-phosphate from D-fructose 6-phosphate: step 1/1. Its function is as follows. Involved in amino sugar synthesis (formation of chitin, supplies the amino sugars of asparagine-linked oligosaccharides of glycoproteins). The polypeptide is Putative glutamine--fructose-6-phosphate aminotransferase [isomerizing] (Saccharomyces cerevisiae (strain YJM789) (Baker's yeast)).